A 200-amino-acid chain; its full sequence is Recombination protein RecR (200 aa).

Residues 60 to 75 (CVYCQALTEDDVCNIC) form a C4-type zinc finger. The region spanning 83–177 (TKLCIIESML…KISRIGFGVP (95 aa)) is the Toprim domain.

This sequence belongs to the RecR family.

May play a role in DNA repair. It seems to be involved in an RecBC-independent recombinational process of DNA repair. It may act with RecF and RecO. The protein is Recombination protein RecR of Francisella tularensis subsp. tularensis (strain WY96-3418).